The following is a 199-amino-acid chain: Recombination protein RecR (199 aa).

The C4-type zinc finger occupies 58 to 73 (CSVCGNLTDTDVCPLC). Positions 81-176 (SVICVVEDPR…KTTRIAHGIP (96 aa)) constitute a Toprim domain.

It belongs to the RecR family.

May play a role in DNA repair. It seems to be involved in an RecBC-independent recombinational process of DNA repair. It may act with RecF and RecO. The polypeptide is Recombination protein RecR (Acetivibrio thermocellus (strain ATCC 27405 / DSM 1237 / JCM 9322 / NBRC 103400 / NCIMB 10682 / NRRL B-4536 / VPI 7372) (Clostridium thermocellum)).